A 367-amino-acid polypeptide reads, in one-letter code: MPAASKNVVMIDNYDSFTWNLYEYLCQEGANVEVFRNDQITIPEIEQLKPDVVVISPGPGHPRTDSGISRDVISHFKGKIPVFGVCMGQQCIFEEFGGDVEYAGEIVHGKTSTVKHDNKGMFKNVPQDVAVTRYHSLAGTLKSLPDCLEITARTDNGIIMGVRHKKYTIEGVQFHPESILTEEGHLMIQNILNVSGGYWEENANGAAQRKESILEKIYAQRRKDYEFEMNRPGRRFADLELYLSMGLAPPLINFYDRLEQNISAGKVAILSEIKRASPSKGVIDGDANAAKQALNYAKAGVATISVLTEPTWFKGNIQDLEVARKAIDSVANRPCILRKEFIFNKYQILEARLAGADTVLLIVKMLS.

The Glutamine amidotransferase type-1 domain maps to 7 to 201; sequence NVVMIDNYDS…LNVSGGYWEE (195 aa). 58 to 60 provides a ligand contact to L-glutamine; sequence GPG. Cys-86 acts as the Nucleophile; for GATase activity in catalysis. L-glutamine-binding positions include Gln-90 and 136–137; that span reads SL. Catalysis depends on for GATase activity residues His-175 and Glu-177. The tract at residues 209–367 is indole-3-glycerol phosphate synthase; sequence RKESILEKIY…TVLLIVKMLS (159 aa).

As to quaternary structure, tetramer of two components I and two components II.

The enzyme catalyses chorismate + L-glutamine = anthranilate + pyruvate + L-glutamate + H(+). The catalysed reaction is 1-(2-carboxyphenylamino)-1-deoxy-D-ribulose 5-phosphate + H(+) = (1S,2R)-1-C-(indol-3-yl)glycerol 3-phosphate + CO2 + H2O. It functions in the pathway amino-acid biosynthesis; L-tryptophan biosynthesis; L-tryptophan from chorismate: step 1/5. The protein operates within amino-acid biosynthesis; L-tryptophan biosynthesis; L-tryptophan from chorismate: step 4/5. The protein is Multifunctional tryptophan biosynthesis protein of Pichia angusta (Yeast).